Consider the following 752-residue polypeptide: Photosystem I P700 chlorophyll a apoprotein A1 (752 aa).

8 helical membrane passes run 73 to 96, 159 to 182, 198 to 222, 294 to 312, 349 to 372, 388 to 414, 436 to 458, and 533 to 551; these read IFSA…FHGA, LYVT…FHYH, LNHH…HVSA, IAHH…GHQY, WHAQ…HHMY, LCIF…IFMV, AIIS…LYIH, and FLIH…LILL. Cysteine 575 and cysteine 584 together coordinate [4Fe-4S] cluster. A run of 2 helical transmembrane segments spans residues 591–612 and 666–688; these read HVFL…HFSW and LSAY…MFLF. Histidine 677 contacts chlorophyll a'. 2 residues coordinate chlorophyll a: methionine 685 and tyrosine 693. Tryptophan 694 is a binding site for phylloquinone. Residues 726–746 form a helical membrane-spanning segment; that stretch reads AVGVAHYLLGGIATTWAFFHA.

It belongs to the PsaA/PsaB family. The PsaA/B heterodimer binds the P700 chlorophyll special pair and subsequent electron acceptors. PSI consists of a core antenna complex that captures photons, and an electron transfer chain that converts photonic excitation into a charge separation. The cyanobacterial PSI reaction center is composed of one copy each of PsaA,B,C,D,E,F,I,J,K,L,M and X, and forms trimeric complexes. PSI electron transfer chain: 5 chlorophyll a, 1 chlorophyll a', 2 phylloquinones and 3 4Fe-4S clusters. PSI core antenna: 90 chlorophyll a, 22 carotenoids, 3 phospholipids and 1 galactolipid. P700 is a chlorophyll a/chlorophyll a' dimer, A0 is one or more chlorophyll a, A1 is one or both phylloquinones and FX is a shared 4Fe-4S iron-sulfur center. is required as a cofactor.

It is found in the cellular thylakoid membrane. The catalysed reaction is reduced [plastocyanin] + hnu + oxidized [2Fe-2S]-[ferredoxin] = oxidized [plastocyanin] + reduced [2Fe-2S]-[ferredoxin]. PsaA and PsaB bind P700, the primary electron donor of photosystem I (PSI), as well as the electron acceptors A0, A1 and FX. PSI is a plastocyanin/cytochrome c6-ferredoxin oxidoreductase, converting photonic excitation into a charge separation, which transfers an electron from the donor P700 chlorophyll pair to the spectroscopically characterized acceptors A0, A1, FX, FA and FB in turn. Oxidized P700 is reduced on the lumenal side of the thylakoid membrane by plastocyanin or cytochrome c6. The protein is Photosystem I P700 chlorophyll a apoprotein A1 of Nostoc punctiforme (strain ATCC 29133 / PCC 73102).